The following is a 153-amino-acid chain: Endoribonuclease YbeY (153 aa).

3 residues coordinate Zn(2+): His118, His122, and His128.

This sequence belongs to the endoribonuclease YbeY family. It depends on Zn(2+) as a cofactor.

The protein resides in the cytoplasm. Its function is as follows. Single strand-specific metallo-endoribonuclease involved in late-stage 70S ribosome quality control and in maturation of the 3' terminus of the 16S rRNA. This is Endoribonuclease YbeY from Staphylococcus carnosus (strain TM300).